Reading from the N-terminus, the 290-residue chain is MTKNQALRAALDSGRLFTAMAAHNPLVAKLAEQAGFGGIWGSGFELSASYAVPDANILSMSTHLEMMRAIASTVSIPLIADIDTGFGNAVNVHYVVPQYEAAGASAIVMEDKTFPKDTSLRTDGRQELVRIEEFQGKIAAATAARADRDFVVIARVEALIAGLGQQEAVRRGQAYEEAGADAILIHSRQKTPDEILAFVKSWPGKVPLVLVPTAYPQLTEADIAALSKVGIVIYGNHAIRAAVGAVREVFARIRRDGGIREVDAALPSVKEIIELQGDERMRAVEARYLK.

A substrate-binding site is contributed by 40–44 (WGSGF). The Nucleophile role is filled by D54. Mg(2+) is bound at residue D81. 3 residues coordinate substrate: R155, H186, and R188.

As to quaternary structure, homodimer. Homotetramer. The cofactor is Co(2+). Mg(2+) is required as a cofactor. Requires Mn(2+) as cofactor.

It carries out the reaction 3-phosphonopyruvate + H2O = pyruvate + phosphate + H(+). Its activity is regulated as follows. Partially inhibited by EDTA. Activity is restored by Co(2+), and to a lesser extent by Ni(2+) and Mg(2+). Unaffected by Cs(2+) and Ca(2+). Activity is reduced by Mn(2+) and Cu(2+). Its function is as follows. Hydrolyzes phosphonopyruvate. Not active towards phosphoenolpyruvate, glycerophosphate, phospho-L-serine or phosphoglycolic acid. In Variovorax sp. (strain Pal2), this protein is Phosphonopyruvate hydrolase.